Here is a 190-residue protein sequence, read N- to C-terminus: Lipocalin Can f 6.0101 (190 aa).

An N-terminal signal peptide occupies residues 1 to 15 (MKLLLLCLGLILVHA). The tract at residues 43 to 54 (SDIKEKIEENGS) is igE-binding. 2 N-linked (GlcNAc...) asparagine glycosylation sites follow: Asn52 and Asn67. The interval 76 to 83 (TKVNGKCT) is igE-binding. A disulfide bridge links Cys82 with Cys175. A glycan (N-linked (GlcNAc...) asparagine) is linked at Asn90. The segment at 91–97 (KTEKDGE) is igE-binding. A no IgE-binding region spans residues 100 to 109 (VVHDGYNLFR). IgE-binding stretches follow at residues 125-132 (NVNQEQEF) and 139-152 (GRKP…KEKF).

Belongs to the calycin superfamily. Lipocalin family. As to quaternary structure, monomer. In terms of tissue distribution, expressed in saliva (at protein level). Expressed in dander (at protein level). According to PubMed:22104604, expressed in submaxillary gland. In contrast, according to PubMed:22515174, not expressed in submaxillary gland. Expressed in bladder and skin, but not in tongue.

It is found in the secreted. The sequence is that of Lipocalin Can f 6.0101 from Canis lupus familiaris (Dog).